Reading from the N-terminus, the 591-residue chain is Aspartate--tRNA ligase (591 aa).

Glu-173 lines the L-aspartate pocket. Residues 197–200 form an aspartate region; sequence QLFK. Arg-219 is an L-aspartate binding site. ATP contacts are provided by residues 219–221 and Gln-228; that span reads RDE. His-448 is a binding site for L-aspartate. Glu-482 is a binding site for ATP. Position 489 (Arg-489) interacts with L-aspartate. An ATP-binding site is contributed by 534 to 537; it reads GLDR.

The protein belongs to the class-II aminoacyl-tRNA synthetase family. Type 1 subfamily. In terms of assembly, homodimer.

It is found in the cytoplasm. It catalyses the reaction tRNA(Asp) + L-aspartate + ATP = L-aspartyl-tRNA(Asp) + AMP + diphosphate. Catalyzes the attachment of L-aspartate to tRNA(Asp) in a two-step reaction: L-aspartate is first activated by ATP to form Asp-AMP and then transferred to the acceptor end of tRNA(Asp). In Shewanella sp. (strain ANA-3), this protein is Aspartate--tRNA ligase.